We begin with the raw amino-acid sequence, 250 residues long: MKTKTILTALLSAIALTGCANNNDTKQVSERNDSLEDFNRTMWKFNYNVIDRYVLEPAAKGWNNYVPKPISSGLAGIANNLDEPVSFINRLIEGEPKKAFVHFNRFWINTVFGLGGFIDFASASKELRIDNQRGFGETLGSYGVDAGTYIVLPIYNATTPRQLTGAVVDAAYMYPFWQWVGGPWALVKYGVQAVDARAKNLNNAELLRQAQDPYITFREAYYQNLQFKVNDGKLVESKESLPDDILKEID.

The N-terminal stretch at 1–18 (MKTKTILTALLSAIALTG) is a signal peptide. Cysteine 19 carries N-palmitoyl cysteine lipidation. A lipid anchor (S-diacylglycerol cysteine) is attached at cysteine 19.

Belongs to the MlaA family.

The protein resides in the cell outer membrane. Its function is as follows. Involved in a phospholipid transport pathway that maintains lipid asymmetry in the outer membrane by retrograde trafficking of phospholipids from the outer membrane to the inner membrane. In Haemophilus influenzae (strain ATCC 51907 / DSM 11121 / KW20 / Rd), this protein is Intermembrane phospholipid transport system lipoprotein MlaA.